Here is an 813-residue protein sequence, read N- to C-terminus: MAEAGGAGSPALPPAPPHGSPRTLATAAGSSASCGPATAVAAAGTAEGPGGGGSARIAVKKAQLRSAPRAKKLEKLGVYSACKAEESCKCNGWKNPNPSPTPPRGDLQQIIVSLTESCRSCSHALAAHVSHLENVSEEEMDRLLGIVLDVEYLFTCVHKEEDADTKQVYFYLFKLLRKSILQRGKPVVEGSLEKKPPFEKPSIEQGVNNFVQYKFSHLPSKERQTTIELAKMFLNRINYWHLEAPSQRRLRSPNDDISGYKENYTRWLCYCNVPQFCDSLPRYETTKVFGRTLLRSVFTIMRRQLLEQARQEKDKLPLEKRTLILTHFPKFLSMLEEEVYSQNSPIWDQDFLSASSRTSPLGIQTVISPPVTGTALFSSNSTSHEQINGGRTSPGCRGSSGLEANPGEKRKMNNSHAPEEAKRSRVMGDIPVELINEVMSTITDPAGMLGPETNFLSAHSARDEAARLEERRGVIEFHVVGNSLNQKPNKKILMWLVGLQNVFSHQLPRMPKEYITRLVFDPKHKTLALIKDGRVIGGICFRMFPSQGFTEIVFCAVTSNEQVKGYGTHLMNHLKEYHIKHEILNFLTYADEYAIGYFKKQGFSKEIKIPKTKYVGYIKDYEGATLMGCELNPQIPYTEFSVIIKKQKEIIKKLIERKQAQIRKVYPGLSCFKDGVRQIPIESIPGIRETGWKPSGKEKSKEPKDPEQLYSTLKNILQQVKNHPNAWPFMEPVKRTEAPGYYEVIRFPMDLKTMSERLRNRYYVSKKLFMADLQRVFTNCKEYNPPESEYYKCASILEKFFFSKIKEAGLIDK.

2 disordered regions span residues 1-55 (MAEA…GGSA) and 380-423 (NSTS…EAKR). The span at 32 to 46 (ASCGPATAVAAAGTA) shows a compositional bias: low complexity. Residues 380-391 (NSTSHEQINGGR) are compositionally biased toward polar residues. A compositionally biased stretch (basic and acidic residues) spans 406 to 423 (PGEKRKMNNSHAPEEAKR). An N-acetyltransferase domain is found at 484 to 632 (LNQKPNKKIL…GATLMGCELN (149 aa)). Glutamate 551 (proton donor/acceptor) is an active-site residue. Acetyl-CoA is bound by residues 555–557 (CAV), 562–568 (QVKGYGT), and 593–596 (YAIG). A Bromo domain is found at 704-808 (KDPEQLYSTL…KFFFSKIKEA (105 aa)).

This sequence belongs to the acetyltransferase family. GCN5 subfamily. As to quaternary structure, interacts with BCAS3. Interacts with SIRT1. Interacts with EP300, CREBBP and DDX17. Component of a large chromatin remodeling complex, at least composed of MYSM1, KAT2B/PCAF, RBM10 and KIF11/TRIP5. Interacts with KLF1; the interaction does not acetylate KLF1 and there is no enhancement of its transactivational activity. Interacts with NFE4. Interacts with MECOM. Interacts with NR2C2 (hypophosphorylated and unsumoylated form); the interaction promotes the transactivation activity of NR2C2. Interacts with NFE4. Interacts with MECOM. Interacts with E2F1; the interaction acetylates E2F1 augmenting its DNA-binding and transcriptional activity. Interacts with NPAS2, BMAL1 and CLOCK. Interacts (unsumoylated form) with NR2C1; the interaction promotes transactivation activity. Interacts with CEBPB. Interacts with NR4A3. Interacts with TBX5. Interacts with PLK4. Interacts with RB1; this interaction leads to RB1 acetylation. Interacts with VRK1.

The protein resides in the nucleus. Its subcellular location is the cytoplasm. It is found in the cytoskeleton. It localises to the microtubule organizing center. The protein localises to the centrosome. It carries out the reaction L-lysyl-[histone] + acetyl-CoA = N(6)-acetyl-L-lysyl-[histone] + CoA + H(+). It catalyses the reaction L-lysyl-[protein] + acetyl-CoA = N(6)-acetyl-L-lysyl-[protein] + CoA + H(+). The enzyme catalyses spermidine + acetyl-CoA = N(8)-acetylspermidine + CoA + H(+). Its function is as follows. Functions as a histone acetyltransferase (HAT) to promote transcriptional activation. Has significant histone acetyltransferase activity with core histones (H3 and H4), and also with nucleosome core particles. Has a a strong preference for acetylation of H3 at 'Lys-9' (H3K9ac). Also acetylates non-histone proteins, such as ACLY, MAPRE1/EB1, PLK4, RRP9/U3-55K and TBX5. Acts as a circadian transcriptional coactivator which enhances the activity of the circadian transcriptional activators: NPAS2-BMAL1 and CLOCK-BMAL1 heterodimers. Involved in heart and limb development by mediating acetylation of TBX5, acetylation regulating nucleocytoplasmic shuttling of TBX5. Acts as a negative regulator of centrosome amplification by mediating acetylation of PLK4. Acetylates RRP9/U3-55K, a core subunit of the U3 snoRNP complex, impairing pre-rRNA processing. Acetylates MAPRE1/EB1, promoting dynamic kinetochore-microtubule interactions in early mitosis. Also acetylates spermidine. This chain is Histone acetyltransferase KAT2B, found in Mus musculus (Mouse).